The following is a 65-amino-acid chain: UPF0434 protein CC_0108 (65 aa).

It belongs to the UPF0434 family.

The sequence is that of UPF0434 protein CC_0108 from Caulobacter vibrioides (strain ATCC 19089 / CIP 103742 / CB 15) (Caulobacter crescentus).